The primary structure comprises 786 residues: MLERTLRVLEYNKVKEQLLEHTASSLGRDKVKHLVPSTDFEEIVEMQDTTDEAAKVIRLKGSAPLGGITDIRSNVKRAKIGSMLSPNELLDIANTMYGSRNMKRFIEDMVDNGVDLPILETHVAQIVSLYDLEKKITNCIGDGGEVVDSASDKLRGIRTQIRTAESRIREKLENMTRSSNAQKMLSDSIVTIRNERYVIPVKQEYRGVYGGIVHDQSASGQTLFIEPQVIVELNNALQEARVKEKQEIERILLMLTEEVAVEADIVLSNVEVVANLDFIFAKAFYAKRIKATKPIVNNERYMDLRQARHPLIDPEVIVPNNIMLGKDFTTIVITGPNTGGKTVTLKTVGICVLMAQSGLHIPVMDESEICVFKNIFADIGDEQSIEQSLSTFSSHMVNIVDILEKADFESLVLFDELGAGTDPQEGAALAISILDEVCNRGARVVATTHYPELKAYGYNREQVINASVEFDVNTLSPTYKLLIGVPGRSNAFEISKRLGLSDRVIEQARNHISTDTNKIENMIAKLEESQKNAERDWNEAEALRKQSEKLHRELQRQIIEFNEERDERLLKAQKEGEEKVEAAKKEAEGIIQELRQLRKAQLANVKDHELIEAKSRLEGAAPELVKKQKVNVKNTAPKQQLRAGDEVKVLTFGQKGQLLEKVSDTEWSVQIGILKMKVKESDMEYINTPKQTEKKAVATVKGRDYHVSLELDLRGERFENAMARVEKYLDDAQLASYPRVSIIHGKGTGALRQGVQDYLKKHRGVKTFRYGDMGEGGLGVTVVELK.

An ATP-binding site is contributed by 335 to 342; that stretch reads GPNTGGKT. Residues 711–786 enclose the Smr domain; that stretch reads LDLRGERFEN…GLGVTVVELK (76 aa).

The protein belongs to the DNA mismatch repair MutS family. MutS2 subfamily. Homodimer. Binds to stalled ribosomes, contacting rRNA.

Its function is as follows. Endonuclease that is involved in the suppression of homologous recombination and thus may have a key role in the control of bacterial genetic diversity. In terms of biological role, acts as a ribosome collision sensor, splitting the ribosome into its 2 subunits. Detects stalled/collided 70S ribosomes which it binds and splits by an ATP-hydrolysis driven conformational change. Acts upstream of the ribosome quality control system (RQC), a ribosome-associated complex that mediates the extraction of incompletely synthesized nascent chains from stalled ribosomes and their subsequent degradation. Probably generates substrates for RQC. The protein is Endonuclease MutS2 of Bacillus cereus (strain ATCC 10987 / NRS 248).